The chain runs to 87 residues: Translation initiation factor IF-1 2 (87 aa).

Residues 1–72 (MAKEELLELD…TKGRINFRHK (72 aa)) form the S1-like domain.

It belongs to the IF-1 family. In terms of assembly, component of the 30S ribosomal translation pre-initiation complex which assembles on the 30S ribosome in the order IF-2 and IF-3, IF-1 and N-formylmethionyl-tRNA(fMet); mRNA recruitment can occur at any time during PIC assembly.

It localises to the cytoplasm. Its function is as follows. One of the essential components for the initiation of protein synthesis. Stabilizes the binding of IF-2 and IF-3 on the 30S subunit to which N-formylmethionyl-tRNA(fMet) subsequently binds. Helps modulate mRNA selection, yielding the 30S pre-initiation complex (PIC). Upon addition of the 50S ribosomal subunit IF-1, IF-2 and IF-3 are released leaving the mature 70S translation initiation complex. The protein is Translation initiation factor IF-1 2 of Burkholderia ambifaria (strain ATCC BAA-244 / DSM 16087 / CCUG 44356 / LMG 19182 / AMMD) (Burkholderia cepacia (strain AMMD)).